The following is a 469-amino-acid chain: tRNA-2-methylthio-N(6)-dimethylallyladenosine synthase (469 aa).

One can recognise an MTTase N-terminal domain in the interval 22 to 142 (RKVFIKTYGC…LPEALRRAKE (121 aa)). [4Fe-4S] cluster contacts are provided by Cys-31, Cys-67, Cys-105, Cys-183, Cys-187, and Cys-190. One can recognise a Radical SAM core domain in the interval 169–401 (RARGVTAFLT…QALLLKQQQE (233 aa)). Residues 404 to 466 (ESCIGKEIDL…TNSLFAERAE (63 aa)) form the TRAM domain.

Belongs to the methylthiotransferase family. MiaB subfamily. As to quaternary structure, monomer. It depends on [4Fe-4S] cluster as a cofactor.

Its subcellular location is the cytoplasm. The catalysed reaction is N(6)-dimethylallyladenosine(37) in tRNA + (sulfur carrier)-SH + AH2 + 2 S-adenosyl-L-methionine = 2-methylsulfanyl-N(6)-dimethylallyladenosine(37) in tRNA + (sulfur carrier)-H + 5'-deoxyadenosine + L-methionine + A + S-adenosyl-L-homocysteine + 2 H(+). In terms of biological role, catalyzes the methylthiolation of N6-(dimethylallyl)adenosine (i(6)A), leading to the formation of 2-methylthio-N6-(dimethylallyl)adenosine (ms(2)i(6)A) at position 37 in tRNAs that read codons beginning with uridine. The polypeptide is tRNA-2-methylthio-N(6)-dimethylallyladenosine synthase (Rhizobium etli (strain ATCC 51251 / DSM 11541 / JCM 21823 / NBRC 15573 / CFN 42)).